The following is a 553-amino-acid chain: Membrane protein insertase YidC (553 aa).

A helical membrane pass occupies residues 6–26 (LIALVLSLLVLVFWEMYFGLF). The disordered stretch occupies residues 34–59 (NKTEQAAPTTTQPATPQTVPPQAATP). A compositionally biased stretch (low complexity) spans 38–59 (QAAPTTTQPATPQTVPPQAATP). 5 helical membrane passes run 331-351 (LASA…VYVL), 360-380 (NWGV…WPLT), 424-444 (VNPM…FALY), 477-497 (IPYL…MFIQ), and 512-532 (IMMI…SGLV).

The protein belongs to the OXA1/ALB3/YidC family. Type 1 subfamily. Interacts with the Sec translocase complex via SecD. Specifically interacts with transmembrane segments of nascent integral membrane proteins during membrane integration.

The protein resides in the cell inner membrane. In terms of biological role, required for the insertion and/or proper folding and/or complex formation of integral membrane proteins into the membrane. Involved in integration of membrane proteins that insert both dependently and independently of the Sec translocase complex, as well as at least some lipoproteins. Aids folding of multispanning membrane proteins. This Syntrophobacter fumaroxidans (strain DSM 10017 / MPOB) protein is Membrane protein insertase YidC.